Here is a 455-residue protein sequence, read N- to C-terminus: Chromosomal replication initiator protein DnaA (455 aa).

The tract at residues 1 to 75 (MLERNDLWNL…AMQATNEQIR (75 aa)) is domain I, interacts with DnaA modulators. Positions 75–117 (RPVMITEEERQQLTRDKDSQVTTGNVAGQQPTTATTPTFMRET) are domain II. Residues 84-93 (RQQLTRDKDS) are compositionally biased toward basic and acidic residues. Positions 84–107 (RQQLTRDKDSQVTTGNVAGQQPTT) are disordered. The segment at 118–334 (KLNPKYTFDT…GALARVQAYS (217 aa)) is domain III, AAA+ region. ATP is bound by residues glycine 162, glycine 164, lysine 165, and threonine 166. A domain IV, binds dsDNA region spans residues 335-455 (RLNNSPITTS…VGDLTGQLKS (121 aa)).

The protein belongs to the DnaA family. As to quaternary structure, oligomerizes as a right-handed, spiral filament on DNA at oriC.

It localises to the cytoplasm. Plays an essential role in the initiation and regulation of chromosomal replication. ATP-DnaA binds to the origin of replication (oriC) to initiate formation of the DNA replication initiation complex once per cell cycle. Binds the DnaA box (a 9 base pair repeat at the origin) and separates the double-stranded (ds)DNA. Forms a right-handed helical filament on oriC DNA; dsDNA binds to the exterior of the filament while single-stranded (ss)DNA is stabiized in the filament's interior. The ATP-DnaA-oriC complex binds and stabilizes one strand of the AT-rich DNA unwinding element (DUE), permitting loading of DNA polymerase. After initiation quickly degrades to an ADP-DnaA complex that is not apt for DNA replication. Binds acidic phospholipids. This Lactiplantibacillus plantarum (strain ATCC BAA-793 / NCIMB 8826 / WCFS1) (Lactobacillus plantarum) protein is Chromosomal replication initiator protein DnaA.